Here is a 522-residue protein sequence, read N- to C-terminus: Nitrogen fixation protein VnfA (522 aa).

The tract at residues 22–183 is a domain; the sequence is LLYEMSQIAT…AQAVELYLVE (162 aa). The region spanning 35 to 177 is the GAF domain; it reads DLSSIISILL…ILATTTAQAV (143 aa). Positions 210–439 constitute a Sigma-54 factor interaction domain; it reads IIGNSKPMLE…LENVIERAML (230 aa). ATP contacts are provided by residues 238 to 245 and 301 to 310; these read GESGVGKE and AAGGTIFLDE. A DNA-binding region (H-T-H motif) is located at residues 493-512; it reads MTEAATHLGLTARVLGLRMG.

Functionally, required for the expression of the V-dependent nitrogen fixation system in Azotobacter vinelandii. It is required for the regulation of nitrogenase 2 transcription. Interacts with sigma-54. The chain is Nitrogen fixation protein VnfA (vnfA) from Azotobacter vinelandii.